The primary structure comprises 141 residues: Sec-independent protein translocase protein TatB (141 aa).

The chain crosses the membrane as a helical span at residues 1 to 21 (MFGISFSELLLVGLVALLVLG). Residues 74–141 (EAQKLLAPLT…SPPSETPRNP (68 aa)) are disordered. The segment covering 89-115 (QETPPPAAESPAPSVPTPPPTSTPAVP) has biased composition (pro residues). The span at 116–129 (PADAAAPPAVAAST) shows a compositional bias: low complexity. Over residues 130–141 (PPSPPSETPRNP) the composition is skewed to pro residues.

The protein belongs to the TatB family. The Tat system comprises two distinct complexes: a TatABC complex, containing multiple copies of TatA, TatB and TatC subunits, and a separate TatA complex, containing only TatA subunits. Substrates initially bind to the TatABC complex, which probably triggers association of the separate TatA complex to form the active translocon.

Its subcellular location is the cell inner membrane. Its function is as follows. Part of the twin-arginine translocation (Tat) system that transports large folded proteins containing a characteristic twin-arginine motif in their signal peptide across membranes. Together with TatC, TatB is part of a receptor directly interacting with Tat signal peptides. TatB may form an oligomeric binding site that transiently accommodates folded Tat precursor proteins before their translocation. This chain is Sec-independent protein translocase protein TatB, found in Pseudomonas aeruginosa (strain ATCC 15692 / DSM 22644 / CIP 104116 / JCM 14847 / LMG 12228 / 1C / PRS 101 / PAO1).